A 486-amino-acid polypeptide reads, in one-letter code: Cardiolipin synthase A (486 aa).

2 helical membrane-spanning segments follow: residues 3-23 (TFYTVMSWLLVFGYWLLIAGV) and 38-58 (MAWLLIIYILPLVGIIAYLSL). PLD phosphodiesterase domains lie at 219–246 (MDLRQHRKVVLIDNYIAYTGSMNLVDPR) and 399–426 (EGGLLHSKSILVDGQLSLVGTVNLDMRS). Active-site residues include histidine 224, lysine 226, aspartate 231, histidine 404, lysine 406, and aspartate 411.

The protein belongs to the phospholipase D family. Cardiolipin synthase subfamily. ClsA sub-subfamily.

The protein localises to the cell inner membrane. It catalyses the reaction 2 a 1,2-diacyl-sn-glycero-3-phospho-(1'-sn-glycerol) = a cardiolipin + glycerol. In terms of biological role, catalyzes the reversible phosphatidyl group transfer from one phosphatidylglycerol molecule to another to form cardiolipin (CL) (diphosphatidylglycerol) and glycerol. This chain is Cardiolipin synthase A, found in Erwinia tasmaniensis (strain DSM 17950 / CFBP 7177 / CIP 109463 / NCPPB 4357 / Et1/99).